A 211-amino-acid polypeptide reads, in one-letter code: Mitotic spindle assembly checkpoint protein MAD2B (211 aa).

An HORMA domain is found at 13–203; that stretch reads QVVADVLSEF…SDILKMQLYV (191 aa).

In terms of assembly, homooligomer. Interacts with REV1. Interacts with FZR1 (in complex with the anaphase promoting complex APC). May interact with CDC20. Heterodimer with REV3L. This dimer forms the minimal DNA polymerase zeta complex (Pol-zeta2), with REV3L bearing DNA polymerase catalytic activity, although its activity is very low in this context. Component of the tetrameric Pol-zeta complex (Pol-zeta4), which consists of REV3L, MAD2L2, POLD2 and POLD3; Pol-zeta4 is the fully active form of DNA polymerase zeta. Component of the shieldin complex, consisting of SHLD1, SHLD2, SHLD3 and MAD2L2/REV7. Within the complex, SHLD2 forms a scaffold which interacts with a SHLD3-MAD2L2 subcomplex via its N-terminus, and with SHLD1 via its C-terminus.

The protein localises to the nucleus. It is found in the cytoplasm. It localises to the cytoskeleton. The protein resides in the spindle. Its subcellular location is the chromosome. Adapter protein able to interact with different proteins and involved in different biological processes. Mediates the interaction between the error-prone DNA polymerase zeta catalytic subunit REV3L and the inserter polymerase REV1, thereby mediating the second polymerase switching in translesion DNA synthesis. Translesion DNA synthesis releases the replication blockade of replicative polymerases, stalled in presence of DNA lesions. May also play a role in signal transduction in response to DNA damage. May regulate the activation of the anaphase promoting complex APC thereby regulating progression through the cell cycle. Component of the shieldin complex, which plays an important role in repair of DNA double-stranded breaks (DSBs). During G1 and S phase of the cell cycle, the complex functions downstream of TP53BP1 to promote non-homologous end joining (NHEJ) and suppress DNA end resection. Through transcriptional regulation may play a role in epithelial-mesenchymal transdifferentiation. The polypeptide is Mitotic spindle assembly checkpoint protein MAD2B (MAD2L2) (Gallus gallus (Chicken)).